The following is a 280-amino-acid chain: Lysosome-associated membrane glycoprotein 5 (280 aa).

The N-terminal stretch at 1 to 29 (MDLRRRALLGVDGLRVLLMLFHTVTRIMA) is a signal peptide. The Extracellular portion of the chain corresponds to 30–235 (EQEVENLSGL…PVDEREQLEE (206 aa)). 2 N-linked (GlcNAc...) asparagine glycosylation sites follow: Asn-35 and Asn-53. A helical transmembrane segment spans residues 236–256 (TLPLILGLILGLVIVVTLVIY). At 257–280 (HIHHKMTANQVQIPRDRSQYKHMG) the chain is on the cytoplasmic side.

It belongs to the LAMP family. Glycosylated.

It localises to the cytoplasmic vesicle membrane. The protein resides in the cell membrane. The protein localises to the cell projection. Its subcellular location is the dendrite. It is found in the cytoplasmic vesicle. It localises to the secretory vesicle. The protein resides in the synaptic vesicle membrane. The protein localises to the growth cone membrane. Its subcellular location is the early endosome membrane. It is found in the recycling endosome. It localises to the endoplasmic reticulum-Golgi intermediate compartment membrane. The protein resides in the endosome membrane. Its function is as follows. Plays a role in short-term synaptic plasticity in a subset of GABAergic neurons in the brain. The polypeptide is Lysosome-associated membrane glycoprotein 5 (LAMP5) (Bos taurus (Bovine)).